Here is a 138-residue protein sequence, read N- to C-terminus: Regulator of ribonuclease activity B (138 aa).

A disordered region spans residues 114–138 (YFEDPNGEDGDDEDFVDEDDDGVRH). Residues 118-138 (PNGEDGDDEDFVDEDDDGVRH) are compositionally biased toward acidic residues.

Belongs to the RraB family. In terms of assembly, interacts with the C-terminal region of Rne.

It is found in the cytoplasm. Its function is as follows. Globally modulates RNA abundance by binding to RNase E (Rne) and regulating its endonucleolytic activity. Can modulate Rne action in a substrate-dependent manner by altering the composition of the degradosome. The chain is Regulator of ribonuclease activity B from Escherichia coli (strain K12).